A 269-amino-acid chain; its full sequence is Probable cytochrome c oxidase subunit 2 (269 aa).

The next 3 membrane-spanning stretches (helical) occupy residues isoleucine 8 to tryptophan 28, leucine 50 to isoleucine 70, and isoleucine 87 to proline 107. Cu cation is bound by residues histidine 189, cysteine 224, cysteine 228, and histidine 232.

This sequence belongs to the cytochrome c oxidase subunit 2 family. The cofactor is Cu cation. Requires heme as cofactor.

Its subcellular location is the cell membrane. It carries out the reaction 4 Fe(II)-[cytochrome c] + O2 + 8 H(+)(in) = 4 Fe(III)-[cytochrome c] + 2 H2O + 4 H(+)(out). Functionally, subunits I and II form the functional core of the enzyme complex. Electrons originating in cytochrome c are transferred via heme a and Cu(A) to the binuclear center formed by heme a3 and Cu(B). The protein is Probable cytochrome c oxidase subunit 2 (ctaC) of Rickettsia bellii (strain RML369-C).